A 363-amino-acid chain; its full sequence is Lipoyl synthase (363 aa).

[4Fe-4S] cluster is bound by residues Cys-55, Cys-60, Cys-66, Cys-81, Cys-85, Cys-88, and Ser-292. Positions 67-281 constitute a Radical SAM core domain; that stretch reads WESREATFLI…SKLAKELGFG (215 aa). Positions 338-363 are disordered; that stretch reads PSEETPVTTRMAKTPAQSNSVAATIR. The segment covering 352–363 has biased composition (polar residues); the sequence is PAQSNSVAATIR.

It belongs to the radical SAM superfamily. Lipoyl synthase family. [4Fe-4S] cluster is required as a cofactor.

Its subcellular location is the cytoplasm. The catalysed reaction is [[Fe-S] cluster scaffold protein carrying a second [4Fe-4S](2+) cluster] + N(6)-octanoyl-L-lysyl-[protein] + 2 oxidized [2Fe-2S]-[ferredoxin] + 2 S-adenosyl-L-methionine + 4 H(+) = [[Fe-S] cluster scaffold protein] + N(6)-[(R)-dihydrolipoyl]-L-lysyl-[protein] + 4 Fe(3+) + 2 hydrogen sulfide + 2 5'-deoxyadenosine + 2 L-methionine + 2 reduced [2Fe-2S]-[ferredoxin]. It participates in protein modification; protein lipoylation via endogenous pathway; protein N(6)-(lipoyl)lysine from octanoyl-[acyl-carrier-protein]: step 2/2. Functionally, catalyzes the radical-mediated insertion of two sulfur atoms into the C-6 and C-8 positions of the octanoyl moiety bound to the lipoyl domains of lipoate-dependent enzymes, thereby converting the octanoylated domains into lipoylated derivatives. The protein is Lipoyl synthase of Corynebacterium aurimucosum (strain ATCC 700975 / DSM 44827 / CIP 107346 / CN-1) (Corynebacterium nigricans).